We begin with the raw amino-acid sequence, 363 residues long: GTPase Obg (363 aa).

The 159-residue stretch at 1–159 (MKFIDEAKIY…LELRLELRVL (159 aa)) folds into the Obg domain. One can recognise an OBG-type G domain in the interval 160–338 (ADVGLLGLPN…LIYAISEALE (179 aa)). Residues 166-173 (GLPNAGKS), 191-195 (FTTLH), 213-216 (DVPG), 284-287 (NKLD), and 319-321 (AAI) contribute to the GTP site. 2 residues coordinate Mg(2+): Ser-173 and Thr-193. Residues 342-363 (RPEIGDLDDNDEDSDEIIRDTE) are disordered. Acidic residues predominate over residues 346 to 356 (GDLDDNDEDSD).

Belongs to the TRAFAC class OBG-HflX-like GTPase superfamily. OBG GTPase family. In terms of assembly, monomer. Mg(2+) serves as cofactor.

The protein resides in the cytoplasm. In terms of biological role, an essential GTPase which binds GTP, GDP and possibly (p)ppGpp with moderate affinity, with high nucleotide exchange rates and a fairly low GTP hydrolysis rate. Plays a role in control of the cell cycle, stress response, ribosome biogenesis and in those bacteria that undergo differentiation, in morphogenesis control. The protein is GTPase Obg of Dechloromonas aromatica (strain RCB).